The following is a 111-amino-acid chain: Aspartate 1-decarboxylase (111 aa).

Serine 25 functions as the Schiff-base intermediate with substrate; via pyruvic acid in the catalytic mechanism. Pyruvic acid (Ser) is present on serine 25. Threonine 57 contributes to the substrate binding site. Tyrosine 58 functions as the Proton donor in the catalytic mechanism. 73–75 provides a ligand contact to substrate; the sequence is GPA.

This sequence belongs to the PanD family. As to quaternary structure, heterooctamer of four alpha and four beta subunits. The cofactor is pyruvate. Post-translationally, is synthesized initially as an inactive proenzyme, which is activated by self-cleavage at a specific serine bond to produce a beta-subunit with a hydroxyl group at its C-terminus and an alpha-subunit with a pyruvoyl group at its N-terminus.

The protein localises to the cytoplasm. The enzyme catalyses L-aspartate + H(+) = beta-alanine + CO2. The protein operates within cofactor biosynthesis; (R)-pantothenate biosynthesis; beta-alanine from L-aspartate: step 1/1. Functionally, catalyzes the pyruvoyl-dependent decarboxylation of aspartate to produce beta-alanine. The polypeptide is Aspartate 1-decarboxylase (Coxiella burnetii (strain RSA 493 / Nine Mile phase I)).